A 422-amino-acid chain; its full sequence is Protein FAM53B (422 aa).

Serine 119, serine 168, serine 170, serine 180, serine 213, and serine 269 each carry phosphoserine. Disordered stretches follow at residues 193–225 and 243–269; these read GQPC…GRLD and CPPS…RSRS. Residues 244-269 show a composition bias toward low complexity; that stretch reads PPSANSTPASTPELARRSSGLARSRS. Residues 282–285 carry the Nuclear localization signal motif; it reads KRRR. 2 positions are modified to phosphoserine: serine 335 and serine 344.

It belongs to the FAM53 family. In terms of assembly, interacts with CTNNB1.

The protein localises to the nucleus. In terms of biological role, acts as a regulator of Wnt signaling pathway by regulating beta-catenin (CTNNB1) nuclear localization. The sequence is that of Protein FAM53B from Mus musculus (Mouse).